A 140-amino-acid polypeptide reads, in one-letter code: MLKTISPLISPELLKVLAEMGHGDEIIFSDAHFPAHSMGPQVIRADGLKVSDLLRAIIPLFELDSYAPPLVMMAAVEGDSLDPTVEARYRDALSLQTPCPEIVRIDRYAFYERAQKAFAIVITGECAKYGNILLKKGVTP.

His22 (proton donor) is an active-site residue. Residues Asp30, Arg107, and 129-131 (YGN) each bind substrate.

The protein belongs to the RbsD / FucU family. FucU mutarotase subfamily. As to quaternary structure, homodecamer.

The protein resides in the cytoplasm. The catalysed reaction is alpha-L-fucose = beta-L-fucose. The protein operates within carbohydrate metabolism; L-fucose metabolism. In terms of biological role, involved in the anomeric conversion of L-fucose. The protein is L-fucose mutarotase of Citrobacter koseri (strain ATCC BAA-895 / CDC 4225-83 / SGSC4696).